The chain runs to 384 residues: Probable endopolygalacturonase C (384 aa).

Positions 1-19 (MVRQLALACGLLAAVAVQA) are cleaved as a signal peptide. Positions 20–40 (APAEPAHPMVTEAPDASLLHK) are excised as a propeptide. Residues Cys45 and Cys63 are joined by a disulfide bond. PbH1 repeat units lie at residues 176 to 207 (ATDL…DIGE) and 208 to 229 (STDI…AINS). The Proton donor role is filled by Asp222. Cys224 and Cys240 are disulfide-bonded. His244 is an active-site residue. 2 PbH1 repeats span residues 254 to 280 (RDDN…RIKA) and 288 to 310 (ISDI…VIEQ). Asn261 carries N-linked (GlcNAc...) asparagine glycosylation. Intrachain disulfides connect Cys349–Cys354 and Cys373–Cys382.

Belongs to the glycosyl hydrolase 28 family.

Its subcellular location is the secreted. It carries out the reaction (1,4-alpha-D-galacturonosyl)n+m + H2O = (1,4-alpha-D-galacturonosyl)n + (1,4-alpha-D-galacturonosyl)m.. Functionally, involved in maceration and soft-rotting of plant tissue. Hydrolyzes the 1,4-alpha glycosidic bonds of de-esterified pectate in the smooth region of the plant cell wall. This Aspergillus aculeatus protein is Probable endopolygalacturonase C (pgaC).